A 307-amino-acid polypeptide reads, in one-letter code: Protease HtpX homolog 1 (307 aa).

2 consecutive transmembrane segments (helical) span residues 7–27 and 38–60; these read LKTL…IITY and IFTA…YLVG. H133 contributes to the Zn(2+) binding site. The active site involves E134. H137 is a Zn(2+) binding site. Helical transmembrane passes span 145–165 and 180–200; these read IGMA…FLLF and LILG…TFLL. E212 is a binding site for Zn(2+).

The protein belongs to the peptidase M48B family. The cofactor is Zn(2+).

The protein localises to the cell membrane. This is Protease HtpX homolog 1 from Sulfolobus acidocaldarius (strain ATCC 33909 / DSM 639 / JCM 8929 / NBRC 15157 / NCIMB 11770).